The sequence spans 75 residues: MITREMIDRINFLYHKSQTEGLTEEEKEEQKRLRQEYVKEIKERVRRELESIKYANNSCEHCGHDHHHHHHHHRH.

It belongs to the UPF0291 family.

It is found in the cytoplasm. This Thermoanaerobacter pseudethanolicus (strain ATCC 33223 / 39E) (Clostridium thermohydrosulfuricum) protein is UPF0291 protein Teth39_0326.